Reading from the N-terminus, the 541-residue chain is RING finger protein 37 (541 aa).

The 81-residue stretch at 258-338 (DVPEEFLDPI…DHFLLQHSIP (81 aa)) folds into the U-box domain. An Asymmetric dimethylarginine modification is found at Arg-451. Residues 483–528 (CASCKRVFSPYFKKEPVYQLPCGHLLCRPCLGEKQRSLPMTCTACQ) form an RING-type zinc finger.

In terms of assembly, interacts with UBE2L3. Interacts with VCP. As to expression, expressed in liver, heart, brain, kidney and testis.

Its subcellular location is the nucleus. It carries out the reaction S-ubiquitinyl-[E2 ubiquitin-conjugating enzyme]-L-cysteine + [acceptor protein]-L-lysine = [E2 ubiquitin-conjugating enzyme]-L-cysteine + N(6)-ubiquitinyl-[acceptor protein]-L-lysine.. Its pathway is protein modification; protein ubiquitination. In terms of biological role, may have a ubiquitin-protein ligase activity acting as an E3 ubiquitin-protein ligase or as a ubiquitin-ubiquitin ligase promoting elongation of ubiquitin chains on substrates. The chain is RING finger protein 37 from Homo sapiens (Human).